The chain runs to 380 residues: Cytochrome b (380 aa).

4 helical membrane-spanning segments follow: residues 33–53 (FGSL…FLAM), 77–98 (WLIR…YMHI), 113–133 (WNIG…GYVL), and 178–198 (FFAF…LHLL). Heme b contacts are provided by His83 and His97. The heme b site is built by His182 and His196. Position 201 (His201) interacts with a ubiquinone. A run of 4 helical transmembrane segments spans residues 226–246 (YKDL…ALFA), 288–308 (LGGV…PILH), 320–340 (LTQF…WIGG), and 347–367 (FIII…VLAP).

This sequence belongs to the cytochrome b family. In terms of assembly, the cytochrome bc1 complex contains 3 respiratory subunits (MT-CYB, CYC1 and UQCRFS1), 2 core proteins (UQCRC1 and UQCRC2) and probably 6 low-molecular weight proteins. It depends on heme b as a cofactor.

Its subcellular location is the mitochondrion inner membrane. In terms of biological role, component of the ubiquinol-cytochrome c reductase complex (complex III or cytochrome b-c1 complex) that is part of the mitochondrial respiratory chain. The b-c1 complex mediates electron transfer from ubiquinol to cytochrome c. Contributes to the generation of a proton gradient across the mitochondrial membrane that is then used for ATP synthesis. This is Cytochrome b (mt-cyb) from Salmo trutta (Brown trout).